We begin with the raw amino-acid sequence, 91 residues long: Hepcidin-1 (91 aa).

Residues 1–24 (MKLSNVFLAAVVILTCVCVFQITA) form the signal peptide. The propeptide occupies 25–64 (VPFIQQVQDEHHVESEELQENQHLTEAEHRQTDPLVLFRT). 4 disulfides stabilise this stretch: Cys73-Cys89, Cys76-Cys79, Cys77-Cys85, and Cys80-Cys88.

It belongs to the hepcidin family.

It localises to the secreted. Functionally, seems to act as a signaling molecule involved in the maintenance of iron homeostasis. Seems to be required in conjunction with HFE to regulate both intestinal iron absorption and iron storage in macrophages. May also have antimicrobial activity. The sequence is that of Hepcidin-1 (hamp1) from Danio rerio (Zebrafish).